Reading from the N-terminus, the 182-residue chain is Putative manganese efflux pump MntP (182 aa).

6 consecutive transmembrane segments (helical) span residues leucine 6–glycine 26, isoleucine 37–valine 57, histidine 71–leucine 91, isoleucine 101–leucine 121, valine 131–isoleucine 151, and tyrosine 162–isoleucine 182.

Belongs to the MntP (TC 9.B.29) family.

The protein localises to the cell membrane. Functionally, probably functions as a manganese efflux pump. The protein is Putative manganese efflux pump MntP of Bacillus cereus (strain Q1).